Consider the following 471-residue polypeptide: Proline and serine-rich protein 2 (471 aa).

Disordered stretches follow at residues 1–46 (MPGN…SFTM) and 82–247 (CDSG…GDHV). Over residues 26 to 43 (LSRGGSLESRCSSSRSRS) the composition is skewed to low complexity. Serine 43 carries the phosphoserine modification. Threonine 45 is subject to Phosphothreonine. The span at 90–101 (SPQSLEESPSSH) shows a compositional bias: low complexity. Positions 154 to 177 (LPPPDSRGPEVFPLPPSLPVPAPS) are enriched in pro residues. A phosphoserine mark is found at serine 187, serine 220, and serine 223. At arginine 263 the chain carries Asymmetric dimethylarginine; alternate. Arginine 263 carries the post-translational modification Omega-N-methylarginine; alternate. Disordered regions lie at residues 310–365 (DTSS…TEQP) and 383–437 (PSSF…RAVG). Positions 313–324 (SEERWQKAEEQR) are enriched in basic and acidic residues. 2 stretches are compositionally biased toward polar residues: residues 354–364 (AQQSRAVQTEQ) and 383–393 (PSSFVPTSKTI). Positions 415–427 (YEPRPDGSQDARK) are enriched in basic and acidic residues. Serine 431 is subject to Phosphoserine. Arginine 450 carries the omega-N-methylarginine modification.

The sequence is that of Proline and serine-rich protein 2 (Proser2) from Mus musculus (Mouse).